Here is a 335-residue protein sequence, read N- to C-terminus: Holliday junction branch migration complex subunit RuvB (335 aa).

Residues 4 to 184 (ADRLIQPTAL…FGIVQRLEFY (181 aa)) are large ATPase domain (RuvB-L). ATP is bound by residues isoleucine 23, arginine 24, glycine 65, lysine 68, threonine 69, threonine 70, 131-133 (EDY), arginine 174, tyrosine 184, and arginine 221. A Mg(2+)-binding site is contributed by threonine 69. The tract at residues 185-255 (NIKDLTQIVK…VASAALDMLD (71 aa)) is small ATPAse domain (RuvB-S). The tract at residues 258–335 (KEGFDYMDRK…LHFGYDYEPN (78 aa)) is head domain (RuvB-H). DNA is bound by residues arginine 294, arginine 313, and arginine 318.

Belongs to the RuvB family. Homohexamer. Forms an RuvA(8)-RuvB(12)-Holliday junction (HJ) complex. HJ DNA is sandwiched between 2 RuvA tetramers; dsDNA enters through RuvA and exits via RuvB. An RuvB hexamer assembles on each DNA strand where it exits the tetramer. Each RuvB hexamer is contacted by two RuvA subunits (via domain III) on 2 adjacent RuvB subunits; this complex drives branch migration. In the full resolvosome a probable DNA-RuvA(4)-RuvB(12)-RuvC(2) complex forms which resolves the HJ.

The protein localises to the cytoplasm. The catalysed reaction is ATP + H2O = ADP + phosphate + H(+). The RuvA-RuvB-RuvC complex processes Holliday junction (HJ) DNA during genetic recombination and DNA repair, while the RuvA-RuvB complex plays an important role in the rescue of blocked DNA replication forks via replication fork reversal (RFR). RuvA specifically binds to HJ cruciform DNA, conferring on it an open structure. The RuvB hexamer acts as an ATP-dependent pump, pulling dsDNA into and through the RuvAB complex. RuvB forms 2 homohexamers on either side of HJ DNA bound by 1 or 2 RuvA tetramers; 4 subunits per hexamer contact DNA at a time. Coordinated motions by a converter formed by DNA-disengaged RuvB subunits stimulates ATP hydrolysis and nucleotide exchange. Immobilization of the converter enables RuvB to convert the ATP-contained energy into a lever motion, pulling 2 nucleotides of DNA out of the RuvA tetramer per ATP hydrolyzed, thus driving DNA branch migration. The RuvB motors rotate together with the DNA substrate, which together with the progressing nucleotide cycle form the mechanistic basis for DNA recombination by continuous HJ branch migration. Branch migration allows RuvC to scan DNA until it finds its consensus sequence, where it cleaves and resolves cruciform DNA. This is Holliday junction branch migration complex subunit RuvB from Pseudoalteromonas atlantica (strain T6c / ATCC BAA-1087).